A 261-amino-acid polypeptide reads, in one-letter code: Chitinase 8 (261 aa).

The first 29 residues, 1-29, serve as a signal peptide directing secretion; that stretch reads MTTTTTRFVQLAACAAASLLAVAASGAAA. Disulfide bonds link Cys-53-Cys-115 and Cys-221-Cys-253. Catalysis depends on Glu-98, which acts as the Proton donor.

Belongs to the glycosyl hydrolase 19 family. Chitinase class II subfamily. As to expression, expressed in roots, leaves, sheaths and meristems.

It catalyses the reaction Random endo-hydrolysis of N-acetyl-beta-D-glucosaminide (1-&gt;4)-beta-linkages in chitin and chitodextrins.. The sequence is that of Chitinase 8 (Cht8) from Oryza sativa subsp. japonica (Rice).